We begin with the raw amino-acid sequence, 148 residues long: UPF0756 membrane protein YeaL (148 aa).

Transmembrane regions (helical) follow at residues 14–34 (ALGF…LIIV), 51–71 (LTIG…SGSL), 80–100 (FFNW…WLGG), and 121–141 (VLGV…AGLV).

It belongs to the UPF0756 family.

Its subcellular location is the cell membrane. This Escherichia fergusonii (strain ATCC 35469 / DSM 13698 / CCUG 18766 / IAM 14443 / JCM 21226 / LMG 7866 / NBRC 102419 / NCTC 12128 / CDC 0568-73) protein is UPF0756 membrane protein YeaL.